Consider the following 239-residue polypeptide: Ribosomal RNA small subunit methyltransferase G (239 aa).

S-adenosyl-L-methionine contacts are provided by residues Gly-78, Phe-83, Ala-129–Glu-130, and Arg-148.

This sequence belongs to the methyltransferase superfamily. RNA methyltransferase RsmG family.

It localises to the cytoplasm. Its function is as follows. Specifically methylates the N7 position of a guanine in 16S rRNA. This Clostridium tetani (strain Massachusetts / E88) protein is Ribosomal RNA small subunit methyltransferase G.